The primary structure comprises 395 residues: Serine-type anaerobic sulfatase-maturating enzyme (395 aa).

Residues proline 18–arginine 249 form the Radical SAM core domain. 2 residues coordinate [4Fe-4S] cluster: cysteine 35 and cysteine 39. Tyrosine 41 provides a ligand contact to S-adenosyl-L-methionine. Cysteine 42 lines the [4Fe-4S] cluster pocket. Residues glycine 84 and arginine 152 each contribute to the S-adenosyl-L-methionine site. Positions 270, 276, and 291 each coordinate [4Fe-4S] cluster. Aspartate 292 serves as the catalytic Proton acceptor. Cysteine 331, cysteine 334, cysteine 340, cysteine 344, and cysteine 357 together coordinate [4Fe-4S] cluster.

Belongs to the radical SAM superfamily. Anaerobic sulfatase-maturating enzyme family. Monomer. Interacts with AtsA prior to its export to the periplasm. This interaction depends on the presence of AtsA 'Ser-72'. Binding of SAM to AtsB promotes the formation of a ternary AtsA-AtsB-SAM complex. It depends on [4Fe-4S] cluster as a cofactor.

Its subcellular location is the cytoplasm. It carries out the reaction L-seryl-[sulfatase] + S-adenosyl-L-methionine = 3-oxo-L-alanyl-[sulfatase] + 5'-deoxyadenosine + L-methionine + H(+). It functions in the pathway protein modification; sulfatase oxidation. Its activity is regulated as follows. Activity is inhibited by iron chelators. Its function is as follows. Involved in 'Ser-type' sulfatase maturation under anaerobic conditions. Catalyzes the post-translational modification of serine ('Ser-72' in the arylsulfatase AtsA) into 3-oxoalanine (also known as C(alpha)-formylglycine (FGly)), by a free radical chemical mechanism initiated via the reductive cleavage of S-adenosyl-L-methionine (SAM). Is capable of catalyzing multiple turnovers. In vitro, use of a peptide substrate in which the target serine is changed to cysteine also gives rise to turnover, supporting approximately 4-fold the activity of that observed with the natural substrate. The sequence is that of Serine-type anaerobic sulfatase-maturating enzyme from Klebsiella pneumoniae.